The chain runs to 168 residues: Phosphopantetheine adenylyltransferase (168 aa).

Position 8 (Ser8) interacts with substrate. ATP is bound by residues 8–9 and His16; that span reads SF. Residues Lys40, Ala72, and Arg86 each coordinate substrate. ATP contacts are provided by residues 87 to 89, Glu97, and 122 to 128; these read GLR and YSFLSSS.

This sequence belongs to the bacterial CoaD family. As to quaternary structure, homohexamer. Mg(2+) serves as cofactor.

Its subcellular location is the cytoplasm. The catalysed reaction is (R)-4'-phosphopantetheine + ATP + H(+) = 3'-dephospho-CoA + diphosphate. It participates in cofactor biosynthesis; coenzyme A biosynthesis; CoA from (R)-pantothenate: step 4/5. Reversibly transfers an adenylyl group from ATP to 4'-phosphopantetheine, yielding dephospho-CoA (dPCoA) and pyrophosphate. This Trichodesmium erythraeum (strain IMS101) protein is Phosphopantetheine adenylyltransferase.